Reading from the N-terminus, the 447-residue chain is Polyamine export protein (447 aa).

Over 1–4 (MLNS) the chain is Cytoplasmic. A CNNM transmembrane domain is found at 1–197 (MLNSIFIIFC…ALAGVLRKQE (197 aa)). A helical membrane pass occupies residues 5–25 (IFIIFCLIAVSAFFSISEISL). At 26-54 (AASRKIKLKLLADEGSINAQRVLKMQENP) the chain is on the periplasmic side. A helical membrane pass occupies residues 55–75 (GMFFTVVQIGLNAVAILGGIV). The Cytoplasmic portion of the chain corresponds to 76 to 99 (GDAAFSPAFSALFSHYMSPELSEQ). Residues 100–120 (LSFILSFSLVTGLFILFADLT) form a helical membrane-spanning segment. Residues 121–141 (PKRIGMIAPEAVALRIINPMR) are Periplasmic-facing. A helical transmembrane segment spans residues 142-162 (FCLFVFRPLVWLFNGMANNIF). Topologically, residues 163–447 (RLFKIPMVRK…DAQGKEDSAA (285 aa)) are cytoplasmic. 2 consecutive CBS domains span residues 216 to 275 (MTSR…NQSM) and 282 to 343 (QIRN…GLEE).

This sequence belongs to the UPF0053 family. PaeA subfamily.

It localises to the cell inner membrane. Functionally, involved in cadaverine and putrescine tolerance in stationary phase. May facilitate the efflux of both cadaverine and putrescine from the cytoplasm, reducing potentially toxic levels under certain stress conditions. The chain is Polyamine export protein from Salmonella typhimurium (strain 14028s / SGSC 2262).